The sequence spans 364 residues: Transcription factor TGA4 (364 aa).

Positions 39–79 are disordered; sequence PGSIIIPTNEKPDSLSEDTSHGTEGTPHKFDQEASTSRHPD. Over residues 48-79 the composition is skewed to basic and acidic residues; sequence EKPDSLSEDTSHGTEGTPHKFDQEASTSRHPD. The region spanning 78-141 is the bZIP domain; that stretch reads PDKIQRRLAQ…NGVDTNALSF (64 aa). Coiled-coil stretches lie at residues 79–127 and 257–277; these read DKIQ…RQQG and NLRQ…EKLQ. The segment at 80–100 is basic motif; the sequence is KIQRRLAQNREAARKSRLRKK. The tract at residues 106-120 is leucine-zipper; sequence LETSRLKLIHLEQEL. A DOG1 domain is found at 149 to 359; sequence IVAFEMEYGH…RALSSSWAAR (211 aa). Residues C256 and C262 are joined by a disulfide bond.

It belongs to the bZIP family. Binds DNA as a dimer. Interaction with the Dof domain proteins OBP1, OBP2 or OBP3 enhances the binding to the ocs element. Interacts with RAP2-3/EPB, an ethylene-responsive element binding protein. The reduced form interacts with NPR1. Predominantly expressed in roots.

The protein resides in the nucleus. Its function is as follows. Transcriptional activator that binds specifically to the DNA sequence 5'-TGACG-3'. Recognizes ocs elements like the as-1 motif of the cauliflower mosaic virus 35S promoter. Binding to the as-1-like cis elements mediate auxin- and salicylic acid-inducible transcription. May be involved in the induction of the systemic acquired resistance (SAR) via its interaction with NPR1. Could also bind to the Hex-motif (5'-TGACGTGG-3') another cis-acting element found in plant histone promoters. The chain is Transcription factor TGA4 (TGA4) from Arabidopsis thaliana (Mouse-ear cress).